Here is a 483-residue protein sequence, read N- to C-terminus: MKTLNRRDFPGAQYPERIIQFGEGNFLRAFVDWQIDLLNEHTDLNSGVVVVRPIETSFPPSLSTQDGLYTTIIRGLNEKGEAVSDARLIRSVNREISVYSEYDEFLKLAHNPEMRFVFSNTTEAGISYHAGDKFDDAPAVSYPAKLTRLLFERFSHFNGALDKGWIIIPCELIDYNGDALRELVLRYAQEWALPEAFIQWLDQANSFCSTLVDRIVTGYPRDEVAKLEEELGYHDGFLDTAEHFYLFVIQGPKSLATELRLDKYPLNVLIVDDIKPYKERKVAILNGAHTALVPVAFQAGLDTVGEAMNDAEICAFVEKAIYEEIIPVLDLPRDELESFASAVTGRFRNPYIKHQLLSIALNGMTKFRTRILPQLLAGQKANGTLPARLTFALAALIAFYRGERNGETYPVQDDAHWLERYQQLWSQHRDRVIGTQELVAIVLAEKDHWEQDLTQVPGLVEQVANDLDAILEKGMREAVRPLC.

Residue 18-29 (IIQFGEGNFLRA) participates in NAD(+) binding.

This sequence belongs to the mannitol dehydrogenase family. UxaB subfamily.

It catalyses the reaction D-altronate + NAD(+) = keto-D-tagaturonate + NADH + H(+). The protein operates within carbohydrate metabolism; pentose and glucuronate interconversion. In Escherichia coli O157:H7, this protein is Altronate oxidoreductase (uxaB).